A 640-amino-acid chain; its full sequence is Epithelial sodium channel subunit beta (640 aa).

Residues 1–50 (MHVKKYLLKGLHRLQKGPGYTYKELLVWYCDNTNTHGPKRIICEGPKKKA) lie on the Cytoplasmic side of the membrane. Residues 51-71 (MWFLLTLLFAALVCWQWGIFI) traverse the membrane as a helical segment. Topologically, residues 72-532 (RTYLSWEVSV…GGQFGFWMGG (461 aa)) are extracellular. Disulfide bonds link Cys-98-Cys-272, Cys-184-Cys-189, Cys-196-Cys-203, Cys-249-Cys-256, Cys-361-Cys-448, Cys-386-Cys-444, Cys-390-Cys-440, Cys-399-Cys-426, and Cys-401-Cys-415. An N-linked (GlcNAc...) asparagine glycan is attached at Asn-260. The chain crosses the membrane as a helical span at residues 533–553 (SVLCLIEFGEIIIDFVWITII). Topologically, residues 554-640 (KLVALAKSLR…IESDSEGDAI (87 aa)) are cytoplasmic. The interval 590-640 (FQPDTAPRSPNTGPYPSEQALPIPGTPPPNYDSLRLQPLDVIESDSEGDAI) is disordered. Residues 616–620 (PPPNY) carry the PY motif; recruits WW domain-containing proteins and is thereby required for ubiquitination and inhibition of the channel by NEDD4 and NEDD4L motif. The span at 631–640 (IESDSEGDAI) shows a compositional bias: acidic residues. Residues Ser-633 and Ser-635 each carry the phosphoserine modification.

Belongs to the amiloride-sensitive sodium channel (TC 1.A.6) family. SCNN1B subfamily. As to quaternary structure, component of the heterotrimeric epithelial sodium channel (ENaC) composed of an alpha/SCNN1A, a beta/SCNN1B and a gamma/SCNN1G subunit. An additional delta/SCNN1D subunit can replace the alpha/SCNN1A subunit to form an alternative channel with specific properties. Interacts with WWP1 (via WW domains). Interacts with WWP2 (via WW domains); inhibits the channel. Interacts with the full-length immature form of PCSK9 (pro-PCSK9); inhibits ENaC by promoting its proteasomal degradation. Interacts (N-glycosylated) with BPIFA1; the interaction is direct and inhibits the proteolytic processing of SCNN1A and SCNN1G and the activation of ENaC. Post-translationally, ubiquitinated. Can be ubiquitinated at multiple sites and undergo monoubiquitination and polyubiquitination. Ubiquitination by NEDD4 or NEDD4L inhibits the ENaC channel through endocytosis, intracellular retention and degradation of its individual subunits. However, some studies could not confirm the ubiquitination of this subunit of the ENaC. In terms of processing, phosphorylated on serine and threonine residues. Aldosterone and insulin increase the basal level of phosphorylation. N-glycosylated. N-glycosylation is required for interaction with BPIFA1. Detected in placenta, lung and kidney. Expressed in kidney (at protein level).

Its subcellular location is the apical cell membrane. The protein localises to the cytoplasmic vesicle membrane. The catalysed reaction is Na(+)(in) = Na(+)(out). With respect to regulation, originally identified and characterized by its inhibition by the diuretic drug amiloride. Its function is as follows. This is one of the three pore-forming subunits of the heterotrimeric epithelial sodium channel (ENaC), a critical regulator of sodium balance and fluid homeostasis. ENaC operates in epithelial tissues, where it mediates the electrodiffusion of sodium ions from extracellular fluid through the apical membrane of cells, with water following osmotically. It plays a key role in maintaining sodium homeostasis through electrogenic sodium reabsorption in the kidneys. Additionally, ENaC is essential for airway surface liquid homeostasis, which is crucial for proper mucus clearance. In Homo sapiens (Human), this protein is Epithelial sodium channel subunit beta.